We begin with the raw amino-acid sequence, 314 residues long: uncharacterized protein (314 aa).

Disordered regions lie at residues 170–203 (RSSM…NPDE) and 258–314 (VGES…PKKR). The span at 171–186 (SSMNSQSQMSESSFPT) shows a compositional bias: low complexity. The segment covering 187-200 (PIDPPPRIPHPPLN) has biased composition (pro residues). The segment covering 261-272 (SSRQGENTQNVH) has biased composition (polar residues). A compositionally biased stretch (basic and acidic residues) spans 289–303 (RFKDDARKSNEDEHM).

This is an uncharacterized protein from Arabidopsis thaliana (Mouse-ear cress).